The following is a 591-amino-acid chain: Aspartate--tRNA(Asp/Asn) ligase (591 aa).

Residue Glu175 coordinates L-aspartate. Positions 199–202 (QQYK) are aspartate. Arg221 and His450 together coordinate L-aspartate. 221–223 (RDE) contacts ATP. An ATP-binding site is contributed by Glu484. An L-aspartate-binding site is contributed by Arg491. ATP is bound at residue 536–539 (GVDR).

The protein belongs to the class-II aminoacyl-tRNA synthetase family. Type 1 subfamily. Homodimer.

The protein resides in the cytoplasm. The catalysed reaction is tRNA(Asx) + L-aspartate + ATP = L-aspartyl-tRNA(Asx) + AMP + diphosphate. In terms of biological role, aspartyl-tRNA synthetase with relaxed tRNA specificity since it is able to aspartylate not only its cognate tRNA(Asp) but also tRNA(Asn). Reaction proceeds in two steps: L-aspartate is first activated by ATP to form Asp-AMP and then transferred to the acceptor end of tRNA(Asp/Asn). This is Aspartate--tRNA(Asp/Asn) ligase from Rhodopseudomonas palustris (strain TIE-1).